Here is a 350-residue protein sequence, read N- to C-terminus: Probable deoxyhypusine synthase (350 aa).

NAD(+) is bound by residues 96–100 (SNLIS), 122–124 (TAG), glutamate 128, and aspartate 229. 127-128 (EE) is a binding site for spermidine. Aspartate 234 is a spermidine binding site. Residue glycine 276 coordinates NAD(+). Residue histidine 281 coordinates spermidine. 301–302 (SA) is a binding site for NAD(+). Spermidine-binding positions include 307–309 (GSD) and 316–322 (EAVSWGK). Lysine 322 serves as the catalytic Nucleophile. 335–336 (EV) is an NAD(+) binding site.

Belongs to the deoxyhypusine synthase family. The cofactor is NAD(+).

The catalysed reaction is [eIF5A protein]-L-lysine + spermidine = [eIF5A protein]-deoxyhypusine + propane-1,3-diamine. The protein operates within protein modification; eIF5A hypusination. Catalyzes the NAD-dependent oxidative cleavage of spermidine and the subsequent transfer of the butylamine moiety of spermidine to the epsilon-amino group of a specific lysine residue of the eIF-5A precursor protein to form the intermediate deoxyhypusine residue. The polypeptide is Probable deoxyhypusine synthase (Schizosaccharomyces pombe (strain 972 / ATCC 24843) (Fission yeast)).